The chain runs to 681 residues: MIDRYKHQQLRIGSVSPQQISAWATKILPNGEIVGEVTKPYTFHYKTNKPEKDGLFCERIFGPIKSGICACGNYRVIGDEKEDPKFCEQCGVEFVDSRIRRYQMGYIKLACPVTHVWYLKRLPSYIANLLDKPLKELEGLVYCDFSFARPITKKPTFLRLRGLFEYEIQSWKYSIPLFFTTQGFDTFRNREISTGAGAIREQLADLDLRIIIENSLVEWEELGEEGHTGNEWEDRKVGRRKDFLVRRVELAKHFIRTNIEPEWMVLCLLPVLPPELRPIIQIDGGKLMSSDINELYRRVIYRNNTLTDLLTTSRSTPGELVMCQEKLVQEAVDTLLDNGIRGQPMRDGHNKVYKSFSDVIEGKEGRFRETLLGKRVDYSGRSVIVVGPSLSLHRCGLPREIAIELFQTFVIRGLIRQHLASNIGVAKSKIREKEPIVWEILQEVMQGHPVLLNRAPTLHRLGIQAFQPVLVEGRAICLHPLVCKGFNADFDGDQMAVHVPLSLEAQVEARLLMFSHMNLLSPAIGDPISVPTQDMLIGLYVLTSGNHRGICVNRYNPCNRRNYQNQKRSDNSHYKYTKEPFFSNSYDAIGAYRQKRINLDSPLWLRWRLDQRVIASRETPIEVHYESLGTFYEIYGHYLIVRSLKKQILFIYIRTTVGHIALYREIEEAIQGFSRAYSSGT.

Zn(2+)-binding residues include Cys69, Cys71, Cys87, and Cys90. Asp489, Asp491, and Asp493 together coordinate Mg(2+).

Belongs to the RNA polymerase beta' chain family. RpoC1 subfamily. In terms of assembly, in plastids the minimal PEP RNA polymerase catalytic core is composed of four subunits: alpha, beta, beta', and beta''. When a (nuclear-encoded) sigma factor is associated with the core the holoenzyme is formed, which can initiate transcription. Mg(2+) serves as cofactor. It depends on Zn(2+) as a cofactor.

Its subcellular location is the plastid. It localises to the chloroplast. The enzyme catalyses RNA(n) + a ribonucleoside 5'-triphosphate = RNA(n+1) + diphosphate. In terms of biological role, DNA-dependent RNA polymerase catalyzes the transcription of DNA into RNA using the four ribonucleoside triphosphates as substrates. This Nicotiana sylvestris (Wood tobacco) protein is DNA-directed RNA polymerase subunit beta'.